The primary structure comprises 525 residues: GMP synthase [glutamine-hydrolyzing] (525 aa).

The 199-residue stretch at 9-207 folds into the Glutamine amidotransferase type-1 domain; the sequence is RILILDFGSQ…VLDICRCTPL (199 aa). Catalysis depends on cysteine 86, which acts as the Nucleophile. Residues histidine 181 and glutamate 183 contribute to the active site. The region spanning 208–400 is the GMPS ATP-PPase domain; the sequence is WTPAKIIEDA…LGLPYDMLYR (193 aa). An ATP-binding site is contributed by 235 to 241; that stretch reads SGGVDSS.

In terms of assembly, homodimer.

The catalysed reaction is XMP + L-glutamine + ATP + H2O = GMP + L-glutamate + AMP + diphosphate + 2 H(+). Its pathway is purine metabolism; GMP biosynthesis; GMP from XMP (L-Gln route): step 1/1. Functionally, catalyzes the synthesis of GMP from XMP. The sequence is that of GMP synthase [glutamine-hydrolyzing] from Sodalis glossinidius (strain morsitans).